The chain runs to 653 residues: Thioredoxin domain-containing protein 3 homolog (653 aa).

The region spanning 9–114 is the Thioredoxin domain; it reads LQETLNTQEA…QETIQETLKN (106 aa). An intrachain disulfide couples Cys-38 to Cys-41. The tract at residues 155 to 299 is NDK 1; sequence KQITVALIKP…FFFPDFKPPT (145 aa). The interval 300-323 is disordered; the sequence is YRSAKSAASRASGRRSKTPSQKPR. A compositionally biased stretch (low complexity) spans 301 to 310; it reads RSAKSAASRA. 2 NDK regions span residues 324 to 459 and 459 to 597; these read LQRT…IFHV and VEQT…QFDW. The interval 603–653 is disordered; sequence QAEEGEVNETSGEQPTDEQSGETEKTEEDGEHEGAQSDQQQAVSEAMEKEE. The span at 617–633 shows a compositional bias: acidic residues; sequence PTDEQSGETEKTEEDGE.

The protein in the C-terminal section; belongs to the NDK family. Testis-specific.

May be required during the final stages of sperm tail maturation. May act by reducing disulfide bonds within the sperm components. This is Thioredoxin domain-containing protein 3 homolog (CiIC3) from Ciona intestinalis (Transparent sea squirt).